The following is a 116-amino-acid chain: MKNVVFSVLLLLSFLFCLANTNEAAVPCSTVDMKAAACVGFATGKDSKPSQACCTGLQQLAQTVKTVDDKKAICRCLKASSKSLGIKDQFLSKIPAACNIKVGFPVSTNTNCETIH.

The signal sequence occupies residues 1-24; that stretch reads MKNVVFSVLLLLSFLFCLANTNEA. Intrachain disulfides connect Cys28–Cys76, Cys38–Cys53, Cys54–Cys98, and Cys74–Cys112.

The protein belongs to the plant LTP family.

Functionally, plant non-specific lipid-transfer proteins transfer phospholipids as well as galactolipids across membranes. May play a role in wax or cutin deposition in the cell walls of expanding epidermal cells and certain secretory tissues. The protein is Non-specific lipid-transfer protein C, cotyledon-specific isoform of Ricinus communis (Castor bean).